The sequence spans 475 residues: Transcription factor EB (475 aa).

The tract at residues 1-52 (MASRIGLRMQLMREQAQQEEQRERMQQQAVMHYMQQQQQQQQQLGGPPTPAI) is disordered. The tract at residues 1 to 166 (MASRIGLRMQ…DDVIDNIMRL (166 aa)) is interaction with ACSS2. The segment covering 26 to 43 (QQQAVMHYMQQQQQQQQQ) has biased composition (low complexity). Phosphoserine is present on residues S108, S113, S121, and S137. Residues 135–152 (GNSAPNSPMAMLHISSNP) carry the Nuclear export signal motif. Phosphoserine; by MTOR is present on S141. The interval 155 to 164 (EFDDVIDNIM) is strong transcription activation domain. T182 is subject to Phosphothreonine. Residue S210 is modified to Phosphoserine; by MTOR. An S-(2,3-dicarboxypropyl)cysteine modification is found at C211. Residues 234-287 (QKKDNHNLIERRRRFNINDRIKELGMLIPKANDLDVRWNKGTILKASVDYIRRM) enclose the bHLH domain. The short motif at 244–247 (RRRR) is the Nuclear localization signal element. Residues 297–318 (LENHSRRLEMTNKQLWLRIQEL) are leucine-zipper. S331 bears the Phosphoserine mark. The interval 351 to 429 (SEDGPGEALM…HGSPFPNLSK (79 aa)) is disordered. Over residues 380 to 389 (LPSAAQPQSP) the composition is skewed to low complexity. Residues S422, S440, S465, S466, and S468 each carry the phosphoserine modification. Over residues 445–468 (ASDPLFSTMSPEASKASSRRSSFS) the composition is skewed to low complexity. Positions 445-475 (ASDPLFSTMSPEASKASSRRSSFSMEEGDVL) are disordered.

It belongs to the MiT/TFE family. In terms of assembly, homodimer and heterodimer; with TFE3 or MITF. Interacts (when phosphorylated by MTOR) with YWHAZ; promoting retention in the cytosol. Interacts with Irgm1; promoting association between TFEB and PPP3CB and dephosphorylation. Interacts with small GTPases Rag (RagA/RRAGA, RagB/RRAGB, RagC/RRAGC and/or RagD/RRAGD); promoting its recruitment to lysosomal membrane in the presence of nutrients. Interacts with ACSS2. Phosphorylation at Ser-210 by MTOR via non-canonical mTORC1 pathway regulates its subcellular location and activity. When nutrients are present, phosphorylation by MTOR promotes association with 14-3-3/YWHA adapters and retention in the cytosol. Inhibition of mTORC1, starvation and lysosomal disruption, promotes dephosphorylation by calcineurin PPP3CB and translocation to the nucleus. Dephosphorylated by calcineurin PPP3CB in response to lysosomal Ca(2+) release. Irgm1 promotes dephosphorylation by calcineurin PPP3CB, resulting in TFEB nuclear translocation and stimulation of lysosomal biogenesis. Exported from the nucleus in a mTORC1-dependent manner in response to nutrient availability. Post-translationally, alkylated via a non-enzymatic covalent modification. Itaconate, an anti-inflammatory metabolite generated in response to lipopolysaccharide, alkylates Cys-211, preventing association with 14-3-3/YWHA adapters, thereby promoting nuclear translocation and activity. In terms of processing, sumoylated; does not affect dimerization with MITF. In terms of tissue distribution, widely expressed.

The protein localises to the nucleus. Its subcellular location is the cytoplasm. It localises to the cytosol. It is found in the lysosome membrane. In terms of biological role, transcription factor that acts as a master regulator of lysosomal biogenesis, autophagy, lysosomal exocytosis, lipid catabolism, energy metabolism and immune response. Specifically recognizes and binds E-box sequences (5'-CANNTG-3'); efficient DNA-binding requires dimerization with itself or with another MiT/TFE family member such as TFE3 or MITF. Involved in the cellular response to amino acid availability by acting downstream of MTOR: in the presence of nutrients, TFEB phosphorylation by MTOR promotes its cytosolic retention and subsequent inactivation. Upon starvation or lysosomal stress, inhibition of MTOR induces TFEB dephosphorylation, resulting in nuclear localization and transcription factor activity. Specifically recognizes and binds the CLEAR-box sequence (5'-GTCACGTGAC-3') present in the regulatory region of many lysosomal genes, leading to activate their expression, thereby playing a central role in expression of lysosomal genes. Regulates lysosomal positioning in response to nutrient deprivation by promoting the expression of PIP4P1. Acts as a positive regulator of autophagy by promoting expression of genes involved in autophagy. In association with TFE3, activates the expression of CD40L in T-cells, thereby playing a role in T-cell-dependent antibody responses in activated CD4(+) T-cells and thymus-dependent humoral immunity. Specifically recognizes the gamma-E3 box, a subset of E-boxes, present in the heavy-chain immunoglobulin enhancer. Plays a role in the signal transduction processes required for normal vascularization of the placenta. Involved in the immune response to infection by the bacteria S.aureus, S.typhimurium or S.enterica. Infection promotes itaconate production, leading to alkylation, resulting in nuclear localization and transcription factor activity. Itaconate-mediated alkylation activates TFEB-dependent lysosomal biogenesis, facilitating the bacteria clearance during the antibacterial innate immune response. In association with ACSS2, promotes the expression of genes involved in lysosome biogenesis and both autophagy upon glucose deprivation. The polypeptide is Transcription factor EB (Mus musculus (Mouse)).